We begin with the raw amino-acid sequence, 282 residues long: Pantothenate synthetase (282 aa).

An ATP-binding site is contributed by 30 to 37 (MGYLHEGH). Catalysis depends on His-37, which acts as the Proton donor. Gln-61 contributes to the (R)-pantoate binding site. Gln-61 is a beta-alanine binding site. 147–150 (GQKD) contacts ATP. Gln-153 provides a ligand contact to (R)-pantoate. ATP-binding positions include Val-176 and 184–187 (LSSR).

Belongs to the pantothenate synthetase family. In terms of assembly, homodimer.

The protein resides in the cytoplasm. It carries out the reaction (R)-pantoate + beta-alanine + ATP = (R)-pantothenate + AMP + diphosphate + H(+). It participates in cofactor biosynthesis; (R)-pantothenate biosynthesis; (R)-pantothenate from (R)-pantoate and beta-alanine: step 1/1. Functionally, catalyzes the condensation of pantoate with beta-alanine in an ATP-dependent reaction via a pantoyl-adenylate intermediate. The chain is Pantothenate synthetase from Desulfitobacterium hafniense (strain DSM 10664 / DCB-2).